Reading from the N-terminus, the 249-residue chain is Probable transcriptional regulatory protein Sare_1779 (249 aa).

This sequence belongs to the TACO1 family.

The protein resides in the cytoplasm. The sequence is that of Probable transcriptional regulatory protein Sare_1779 from Salinispora arenicola (strain CNS-205).